Consider the following 442-residue polypeptide: Phosphoglucosamine mutase (442 aa).

Residue serine 98 is the Phosphoserine intermediate of the active site. Mg(2+)-binding residues include serine 98, aspartate 236, aspartate 238, and aspartate 240. Residue serine 98 is modified to Phosphoserine.

Belongs to the phosphohexose mutase family. It depends on Mg(2+) as a cofactor. Post-translationally, activated by phosphorylation.

It carries out the reaction alpha-D-glucosamine 1-phosphate = D-glucosamine 6-phosphate. In terms of biological role, catalyzes the conversion of glucosamine-6-phosphate to glucosamine-1-phosphate. The sequence is that of Phosphoglucosamine mutase from Natranaerobius thermophilus (strain ATCC BAA-1301 / DSM 18059 / JW/NM-WN-LF).